We begin with the raw amino-acid sequence, 386 residues long: 2-deoxy-scyllo-inosose synthase (386 aa).

Residues Asp42, 73-76 (EVHK), 105-109 (GITGN), 129-130 (TT), 140-142 (SLK), and 151-152 (KN) contribute to the NAD(+) site. The active site involves Lys142. Residue Glu184 coordinates Co(2+). Glu244 is an active-site residue. Positions 247 and 263 each coordinate Co(2+).

It belongs to the sugar phosphate cyclases superfamily. DOI synthase family. NAD(+) is required as a cofactor. Requires Co(2+) as cofactor.

The enzyme catalyses D-glucose 6-phosphate = 2-deoxy-L-scyllo-inosose + phosphate. Its pathway is metabolic intermediate biosynthesis; 2-deoxystreptamine biosynthesis; 2-deoxystreptamine from D-glucose 6-phosphate: step 1/4. It participates in antibiotic biosynthesis; paromomycin biosynthesis. Its function is as follows. Catalyzes the intramolecular carbocycle formation from D-glucose-6-phosphate to 2-deoxy-scyllo-inosose (DOI). The chain is 2-deoxy-scyllo-inosose synthase (parC) from Streptomyces paromomycinus (Streptomyces rimosus subsp. paromomycinus).